A 154-amino-acid chain; its full sequence is Transcriptional repressor NrdR (154 aa).

A zinc finger lies at 3–34 (CPFCGANDTKVIDSRLVAEGEQVRRRRECLAC). The ATP-cone domain occupies 49-139 (PRLIKQDGSR…VYRRFQDLNE (91 aa)).

This sequence belongs to the NrdR family. It depends on Zn(2+) as a cofactor.

Functionally, negatively regulates transcription of bacterial ribonucleotide reductase nrd genes and operons by binding to NrdR-boxes. This chain is Transcriptional repressor NrdR, found in Pseudomonas syringae pv. syringae (strain B728a).